The primary structure comprises 96 residues: Cell division topological specificity factor (96 aa).

This sequence belongs to the MinE family.

In terms of biological role, prevents the cell division inhibition by proteins MinC and MinD at internal division sites while permitting inhibition at polar sites. This ensures cell division at the proper site by restricting the formation of a division septum at the midpoint of the long axis of the cell. The protein is Cell division topological specificity factor of Nitrosococcus oceani (strain ATCC 19707 / BCRC 17464 / JCM 30415 / NCIMB 11848 / C-107).